The sequence spans 149 residues: Myoglobin (149 aa).

The residue at position 2 (V2) is an N-acetylvaline. The Globin domain occupies V2–K143. H89 contributes to the heme b binding site.

Belongs to the globin family. As to quaternary structure, monomeric.

It localises to the cytoplasm. It is found in the sarcoplasm. The enzyme catalyses Fe(III)-heme b-[protein] + nitric oxide + H2O = Fe(II)-heme b-[protein] + nitrite + 2 H(+). It carries out the reaction H2O2 + AH2 = A + 2 H2O. Functionally, monomeric heme protein which primary function is to store oxygen and facilitate its diffusion within muscle tissues. Reversibly binds oxygen through a pentacoordinated heme iron and enables its timely and efficient release as needed during periods of heightened demand. Depending on the oxidative conditions of tissues and cells, and in addition to its ability to bind oxygen, it also has a nitrite reductase activity whereby it regulates the production of bioactive nitric oxide. Under stress conditions, like hypoxia and anoxia, it also protects cells against reactive oxygen species thanks to its pseudoperoxidase activity. The protein is Myoglobin (mb) of Mustelus antarcticus (Gummy shark).